The primary structure comprises 656 residues: Mucin-20 (656 aa).

An N-terminal signal peptide occupies residues 1–21 (MGSVWGLAVPLLVFCWKVGVS). Polar residues-rich tracts occupy residues 85 to 96 (ATSISSEVNSRD), 114 to 125 (PAASSLEAQTTS), and 159 to 170 (TTSPAPSFLDTQ). Disordered regions lie at residues 85–125 (ATSI…QTTS), 159–232 (TTSP…TQTI), and 329–348 (YLSSESSSSSDSSAGVLSSS). Positions 171 to 227 (TTSPEPSSLTTSPAPSSLITSPTPSSLTTSPAPSFLDTQTTSPAPSSLTTSPAPSSL) are enriched in low complexity. Tandem repeats lie at residues 180-188 (TTSPAPSSL), 189-197 (ITSPTPSSL), 198-206 (TTSPAPSFL), 210-218 (TTSPAPSSL), and 219-227 (TTSPAPSSL). An approximate repeats region spans residues 180–227 (TTSPAPSSLITSPTPSSLTTSPAPSFLDTQTTSPAPSSLTTSPAPSSL). Residues asparagine 366 and asparagine 570 are each glycosylated (N-linked (GlcNAc...) asparagine). Residues 399–603 (TAALFTSEIL…WIRKTTKHDP (205 aa)) form an involved in oligomerization region. Over residues 560–573 (STTASTSKNPNITL) the composition is skewed to polar residues. Residues 560–592 (STTASTSKNPNITLTKTTASPKPPTHPTTSAST) form a disordered region. The interval 604-656 (GEDGGFLLVRLTVASPKDLTEHNAREKLMNQLRRELHARMPLVHMSFLSIRRG) is interaction with MET.

Interacts with MET; oligomerization increases affinity for MET. Highly expressed in kidney. Up-regulated in renal tissues during renal injury.

The protein resides in the secreted. It localises to the apical cell membrane. It is found in the basolateral cell membrane. The protein localises to the cell projection. Its subcellular location is the microvillus membrane. May regulate MET signaling cascade. Seems to decrease hepatocyte growth factor (HGF)-induced transient MAPK activation. Blocks GRB2 recruitment to MET thus suppressing the GRB2-RAS pathway. Inhibits HGF-induced proliferation of MMP1 and MMP9 expression. The chain is Mucin-20 (Muc20) from Mus musculus (Mouse).